Consider the following 443-residue polypeptide: Thymidine phosphorylase (443 aa).

Belongs to the thymidine/pyrimidine-nucleoside phosphorylase family. Homodimer.

The enzyme catalyses thymidine + phosphate = 2-deoxy-alpha-D-ribose 1-phosphate + thymine. It functions in the pathway pyrimidine metabolism; dTMP biosynthesis via salvage pathway; dTMP from thymine: step 1/2. In terms of biological role, the enzymes which catalyze the reversible phosphorolysis of pyrimidine nucleosides are involved in the degradation of these compounds and in their utilization as carbon and energy sources, or in the rescue of pyrimidine bases for nucleotide synthesis. In Shewanella sp. (strain ANA-3), this protein is Thymidine phosphorylase.